Consider the following 397-residue polypeptide: P-selectin glycoprotein ligand 1 (397 aa).

The first 17 residues, 1–17 (MSPSFLVLLTILGPGNS), serve as a signal peptide directing secretion. The propeptide occupies 18-41 (LQLQDPWGHETKEAPGPVHLRERR). Topologically, residues 18–307 (LQLQDPWGHE…SSDLIPVKQC (290 aa)) are extracellular. At Tyr-54 the chain carries Sulfotyrosine. Thr-58 is a glycosylation site (O-linked (GalNAc...) threonine). An N-linked (GlcNAc...) asparagine glycan is attached at Asn-66. The tract at residues 89–261 (TSAGTSERAT…TMETASTESN (173 aa)) is disordered. Residues 120-198 (STDSATQWSL…PMEAETSQPA (79 aa)) show a composition bias toward polar residues. Repeat copies occupy residues 126–135 (QWSLTSVETV), 136–145 (QPASTEVETS), 146–155 (QPAPMEAETS), 156–165 (QPAPMEAETS), 166–175 (QPAPMEAETS), 176–185 (QPAPMEADTS), 186–195 (QPAPMEAETS), 196–205 (QPAPNEAETS), 206–215 (KPAPTEAETS), and 216–225 (KPAPTEAETT). The 10 X 10 AA tandem repeats stretch occupies residues 126–225 (QWSLTSVETV…KPAPTEAETT (100 aa)). A compositionally biased stretch (polar residues) spans 236 to 261 (LFTTSAATEVPSTEPTTMETASTESN). An N-linked (GlcNAc...) asparagine glycan is attached at Asn-261. Residues 308-328 (LLIILILASLATIFLVCTVVL) traverse the membrane as a helical segment. Residues 329–397 (AVRLSRKTHM…DDLTLHSFLP (69 aa)) are Cytoplasmic-facing. The segment at 364–390 (PVTANGGLPKVQDLKTEPSGDRDGDDL) is disordered. The span at 375 to 390 (QDLKTEPSGDRDGDDL) shows a compositional bias: basic and acidic residues. Thr-391 bears the Phosphothreonine mark. Residue Ser-394 is modified to Phosphoserine.

As to quaternary structure, homodimer; disulfide-linked. Interacts with P- and E-selectins, through their lectin/EGF domains. Interaction with P-selectin requires sialyl Lewis X glycan modification and tyrosine sulfation, probably on Tyr-54, for high affinity binding. Dimerization appears not to be required for P-selectin/SELP binding. Interacts with SNX20. Interacts with MSN and SYK; mediates SYK activation downstream of SELPLG. Interacts with HAVCR1. In terms of processing, displays complex, core-2, sialylated and fucosylated O-linked oligosaccharides, at least some of which appear to contain poly-N-acetyllactosamine with varying degrees of substitution. Mainly disialylated or neutral forms of the core-2 tetrasaccharide, Galbeta1--&gt;4GlcNAcbeta1--&gt;6(Galbeta1--&gt;3)GalNAcOH. The GlcN:GalN ratio is approximately 2:1 and the Man:Fuc ratio 3:5. Contains about 14% fucose with alpha-1,3 linkage present in two forms: One species is a disialylated, monofucosylated glycan, and the other, a monosialylated, trifucosylated glycan with a polylactosamine backbone. The fucosylated forms carry the Lewis antigen and are important for interaction with selectins and for functioning. No sulfated O-glycans. Some N-glycosylation. Highly expressed in blood, bone marrow, brain, adipose tissue, spleen, and thymus. Also expressed in heart, kidney, liver, muscle, ovary, and stomach.

It localises to the cell membrane. In terms of biological role, a SLe(x)-type proteoglycan, which through high affinity, calcium-dependent interactions with E- and P-selectins, mediates rapid rolling of leukocytes over vascular surfaces during the initial steps in inflammation. Critical for the initial leukocyte capture. This Mus musculus (Mouse) protein is P-selectin glycoprotein ligand 1 (Selplg).